The following is a 239-amino-acid chain: Adapter protein MecA (239 aa).

Over residues 118–128 the composition is skewed to basic and acidic residues; it reads EQRTKEKEAQG. Residues 118-137 are disordered; sequence EQRTKEKEAQGSKRQKSSAR.

This sequence belongs to the MecA family. In terms of assembly, homodimer.

Enables the recognition and targeting of unfolded and aggregated proteins to the ClpC protease or to other proteins involved in proteolysis. The polypeptide is Adapter protein MecA (Staphylococcus aureus (strain JH1)).